The chain runs to 418 residues: Serine--tRNA ligase (418 aa).

227–229 (TSE) is an L-serine binding site. ATP contacts are provided by residues 258 to 260 (RRE) and Val274. Glu281 contacts L-serine. An ATP-binding site is contributed by 345–348 (ELTS). Thr380 contacts L-serine.

The protein belongs to the class-II aminoacyl-tRNA synthetase family. Type-1 seryl-tRNA synthetase subfamily. In terms of assembly, homodimer. The tRNA molecule binds across the dimer.

The protein localises to the cytoplasm. It carries out the reaction tRNA(Ser) + L-serine + ATP = L-seryl-tRNA(Ser) + AMP + diphosphate + H(+). The catalysed reaction is tRNA(Sec) + L-serine + ATP = L-seryl-tRNA(Sec) + AMP + diphosphate + H(+). The protein operates within aminoacyl-tRNA biosynthesis; selenocysteinyl-tRNA(Sec) biosynthesis; L-seryl-tRNA(Sec) from L-serine and tRNA(Sec): step 1/1. Functionally, catalyzes the attachment of serine to tRNA(Ser). Is also able to aminoacylate tRNA(Sec) with serine, to form the misacylated tRNA L-seryl-tRNA(Sec), which will be further converted into selenocysteinyl-tRNA(Sec). This is Serine--tRNA ligase from Rhodococcus jostii (strain RHA1).